We begin with the raw amino-acid sequence, 337 residues long: Heat-inducible transcription repressor HrcA (337 aa).

The protein belongs to the HrcA family.

Negative regulator of class I heat shock genes (grpE-dnaK-dnaJ and groELS operons). Prevents heat-shock induction of these operons. The polypeptide is Heat-inducible transcription repressor HrcA (Polaromonas naphthalenivorans (strain CJ2)).